Here is a 464-residue protein sequence, read N- to C-terminus: MAKLARVVGLVQEEQPSDMTNHPRYSPPPQQPGTPGYAQGQQQTYSQQFDWRYPPSPPPQPTQYRQPYEALGGTRPGLIPGVIPTMTPPPGMVRQRPRAGMLAIGAVTIAVVSAGIGGAAASLVGFNRAPAGPSGGPVAASAAPSIPAANMPPGSVEQVAAKVVPSVVMLETDLGRQSEEGSGIILSAEGLILTNNHVIAAAAKPPLGSPPPKTTVTFSDGRTAPFTVVGADPTSDIAVVRVQGVSGLTPISLGSSSDLRVGQPVLAIGSPLGLEGTVTTGIVSALNRPVSTTGEAGNQNTVLDAIQTDAAINPGNSGGALVNMNAQLVGVNSAIATLGADSADAQSGSIGLGFAIPVDQAKRIADELISTGKASHASLGVQVTNDKDTLGAKIVEVVAGGAAANAGVPKGVVVTKVDDRPINSADALVAAVRSKAPGATVALTFQDPSGGSRTVQVTLGKAEQ.

The tract at residues 1-71 (MAKLARVVGL…TQYRQPYEAL (71 aa)) is disordered. The Cytoplasmic segment spans residues 1 to 100 (MAKLARVVGL…GMVRQRPRAG (100 aa)). Residues 39 to 48 (QGQQQTYSQQ) are compositionally biased toward low complexity. The chain crosses the membrane as a helical span at residues 101–121 (MLAIGAVTIAVVSAGIGGAAA). The Periplasmic segment spans residues 122–464 (SLVGFNRAPA…VQVTLGKAEQ (343 aa)). Residues histidine 197, aspartate 236, and serine 317 each act as charge relay system in the active site. The region spanning 368-449 (LISTGKASHA…TVALTFQDPS (82 aa)) is the PDZ domain.

This sequence belongs to the peptidase S1C family. Homotrimer. Interacts with numerous proteins, including the 35 kDa antigen PspA.

The protein localises to the cell inner membrane. It localises to the secreted. The protein resides in the cell wall. It catalyses the reaction Acts on substrates that are at least partially unfolded. The cleavage site P1 residue is normally between a pair of hydrophobic residues, such as Val-|-Val.. Probably regulates its own activity by autocleavage, which removes the PDZ domain. Inhibited by the serine protease inhibitor diisopropylfluorophosphate (DFP). Inhibited by fluoroquinolone such as ciprofloxacin, moxifloxacin and ofloxacin and their analogs. Functionally, required for virulence. Acts both as a protease, which degrades and/or refolds damaged substrate targets, and as a chaperone. Plays an important role in the stress response network mediated through the two-component regulatory system MprAB and SigE signaling networks. May utilize its PDZ domain to recognize and process misfolded proteins at the cell membrane, leading to activation of the MprAB and SigE signaling pathways and subsequent establishment of a positive feedback loop that facilitates bacterial adaptation. Interacts with and potentially cleaves several proteins, including the 35 kDa antigen PspA. Proteolytic cleavage of PspA may help to maintain cell envelope homeostasis in Mycobacterium and regulate specific stress response pathways during periods of extracytoplasmic stress. In vitro, exhibits proteolytic activity against the artificial substrate beta-casein. This is Serine protease PepD from Mycobacterium tuberculosis (strain ATCC 25618 / H37Rv).